We begin with the raw amino-acid sequence, 219 residues long: Melanoma-associated antigen H1 (219 aa).

Residues 1–13 are compositionally biased toward basic residues; it reads MPRGRKSRRRRNA. The tract at residues 1–84 is disordered; it reads MPRGRKSRRR…QKPSVPRSNF (84 aa). The region spanning 1–198 is the MAGE domain; sequence MPRGRKSRRR…KDWPCNYDWD (198 aa). The span at 44–57 shows a compositional bias: acidic residues; it reads PEDDLSGPEEDPST. Over residues 58–74 the composition is skewed to low complexity; it reads PEEASTTPEEASSTAQA. Tyr195 bears the Phosphotyrosine mark.

This is Melanoma-associated antigen H1 (MAGEH1) from Homo sapiens (Human).